Here is a 133-residue protein sequence, read N- to C-terminus: Large ribosomal subunit protein uL22 (133 aa).

Belongs to the universal ribosomal protein uL22 family. In terms of assembly, part of the 50S ribosomal subunit.

Functionally, this protein binds specifically to 23S rRNA; its binding is stimulated by other ribosomal proteins, e.g. L4, L17, and L20. It is important during the early stages of 50S assembly. It makes multiple contacts with different domains of the 23S rRNA in the assembled 50S subunit and ribosome. In terms of biological role, the globular domain of the protein is located near the polypeptide exit tunnel on the outside of the subunit, while an extended beta-hairpin is found that lines the wall of the exit tunnel in the center of the 70S ribosome. The polypeptide is Large ribosomal subunit protein uL22 (Borrelia garinii subsp. bavariensis (strain ATCC BAA-2496 / DSM 23469 / PBi) (Borreliella bavariensis)).